The primary structure comprises 308 residues: Tetraacyldisaccharide 4'-kinase (308 aa).

63-70 (SFGGNGKT) lines the ATP pocket.

This sequence belongs to the LpxK family.

It catalyses the reaction a lipid A disaccharide + ATP = a lipid IVA + ADP + H(+). It participates in glycolipid biosynthesis; lipid IV(A) biosynthesis; lipid IV(A) from (3R)-3-hydroxytetradecanoyl-[acyl-carrier-protein] and UDP-N-acetyl-alpha-D-glucosamine: step 6/6. Functionally, transfers the gamma-phosphate of ATP to the 4'-position of a tetraacyldisaccharide 1-phosphate intermediate (termed DS-1-P) to form tetraacyldisaccharide 1,4'-bis-phosphate (lipid IVA). In Campylobacter jejuni subsp. doylei (strain ATCC BAA-1458 / RM4099 / 269.97), this protein is Tetraacyldisaccharide 4'-kinase.